The following is a 293-amino-acid chain: Probable porphobilinogen deaminase (293 aa).

An S-(dipyrrolylmethanemethyl)cysteine modification is found at cysteine 233.

It belongs to the HMBS family. Dipyrromethane serves as cofactor.

The enzyme catalyses 4 porphobilinogen + H2O = hydroxymethylbilane + 4 NH4(+). It functions in the pathway porphyrin-containing compound metabolism; protoporphyrin-IX biosynthesis; coproporphyrinogen-III from 5-aminolevulinate: step 2/4. In terms of biological role, tetrapolymerization of the monopyrrole PBG into the hydroxymethylbilane pre-uroporphyrinogen in several discrete steps. This is Probable porphobilinogen deaminase from Saccharolobus islandicus (strain L.S.2.15 / Lassen #1) (Sulfolobus islandicus).